We begin with the raw amino-acid sequence, 203 residues long: Probable proteasome subunit beta type-4 (203 aa).

This sequence belongs to the peptidase T1B family. In terms of assembly, the 26S proteasome consists of a 20S proteasome core and two 19S regulatory subunits. The 20S proteasome core is composed of 28 subunits that are arranged in four stacked rings, resulting in a barrel-shaped structure. The two end rings are each formed by seven alpha subunits, and the two central rings are each formed by seven beta subunits. The catalytic chamber with the active sites is on the inside of the barrel.

It is found in the cytoplasm. It localises to the nucleus. In terms of biological role, non-catalytic component of the proteasome, a multicatalytic proteinase complex which is characterized by its ability to cleave peptides with Arg, Phe, Tyr, Leu, and Glu adjacent to the leaving group at neutral or slightly basic pH. The proteasome has an ATP-dependent proteolytic activity. This Neurospora crassa (strain ATCC 24698 / 74-OR23-1A / CBS 708.71 / DSM 1257 / FGSC 987) protein is Probable proteasome subunit beta type-4 (pcb-4).